A 282-amino-acid polypeptide reads, in one-letter code: ATP phosphoribosyltransferase (282 aa).

It belongs to the ATP phosphoribosyltransferase family. Long subfamily. Mg(2+) serves as cofactor.

It localises to the cytoplasm. It carries out the reaction 1-(5-phospho-beta-D-ribosyl)-ATP + diphosphate = 5-phospho-alpha-D-ribose 1-diphosphate + ATP. It participates in amino-acid biosynthesis; L-histidine biosynthesis; L-histidine from 5-phospho-alpha-D-ribose 1-diphosphate: step 1/9. Feedback inhibited by histidine. In terms of biological role, catalyzes the condensation of ATP and 5-phosphoribose 1-diphosphate to form N'-(5'-phosphoribosyl)-ATP (PR-ATP). Has a crucial role in the pathway because the rate of histidine biosynthesis seems to be controlled primarily by regulation of HisG enzymatic activity. This chain is ATP phosphoribosyltransferase, found in Pyrobaculum islandicum (strain DSM 4184 / JCM 9189 / GEO3).